The primary structure comprises 986 residues: Ephrin type-A receptor 4-A (986 aa).

An N-terminal signal peptide occupies residues 1–20 (MAGIVHGILFCGLFGLCWAV). At 21-547 (TGSRIYPASE…MIGEGASPTV (527 aa)) the chain is on the extracellular side. Positions 30-209 (EVTLLDSRSV…FYKKCPLTVR (180 aa)) constitute an Eph LBD domain. Fibronectin type-III domains are found at residues 328–438 (PPSA…TNQA) and 439–536 (APST…TVPS). N-linked (GlcNAc...) asparagine glycans are attached at residues N340 and N407. The chain crosses the membrane as a helical span at residues 548-569 (LLVSVAGSIVLVVILIAAFVIS). At 570–986 (RRRSKYSKAK…QQIQGRMVPV (417 aa)) the chain is on the cytoplasmic side. 2 positions are modified to phosphotyrosine; by autocatalysis: Y595 and Y601. The 262-residue stretch at 620-881 (IKIEKVIGVG…QIVSMLDKLI (262 aa)) folds into the Protein kinase domain. ATP-binding positions include 626–634 (IGVGEFGEV) and K652. D745 acts as the Proton acceptor in catalysis. 2 positions are modified to phosphotyrosine; by autocatalysis: Y778 and Y928. Positions 911-975 (SQVASVLDWL…LSSVQGMRTQ (65 aa)) constitute an SAM domain. The PDZ-binding motif lies at 984-986 (VPV).

The protein belongs to the protein kinase superfamily. Tyr protein kinase family. Ephrin receptor subfamily.

The protein localises to the cell membrane. The protein resides in the early endosome. The catalysed reaction is L-tyrosyl-[protein] + ATP = O-phospho-L-tyrosyl-[protein] + ADP + H(+). In terms of biological role, receptor tyrosine kinase which binds membrane-bound ephrin family ligands residing on adjacent cells, leading to contact-dependent bidirectional signaling into neighboring cells. The signaling pathway downstream of the receptor is referred to as forward signaling while the signaling pathway downstream of the ephrin ligand is referred to as reverse signaling. Highly promiscuous, it has the unique property among Eph receptors to bind and to be physiologically activated by both GPI-anchored ephrin-A and transmembrane ephrin-B ligands including EFNA1 and EFNB3. Upon activation by ephrin ligands, modulates cell morphology and integrin-dependent cell adhesion through regulation of the Rac, Rap and Rho GTPases activity. Plays an important role in the development of the nervous system controlling different steps of axonal guidance including the establishment of the corticospinal projections. This chain is Ephrin type-A receptor 4-A (epha4-a), found in Xenopus laevis (African clawed frog).